Consider the following 161-residue polypeptide: Putative pre-16S rRNA nuclease (161 aa).

This sequence belongs to the YqgF nuclease family.

The protein localises to the cytoplasm. In terms of biological role, could be a nuclease involved in processing of the 5'-end of pre-16S rRNA. The sequence is that of Putative pre-16S rRNA nuclease from Bradyrhizobium diazoefficiens (strain JCM 10833 / BCRC 13528 / IAM 13628 / NBRC 14792 / USDA 110).